The sequence spans 779 residues: Acyl-CoA dehydrogenase family member 11 (779 aa).

Residues K163, K166, and K175 each carry the N6-acetyllysine modification. At S210 the chain carries Phosphoserine. Residue Y323 is modified to Phosphotyrosine. Residues K368 and K390 each carry the N6-succinyllysine modification. Residues 503–513, 511–513, 537–539, and S539 contribute to the FAD site; these read FCMTEPNVSSS, SSS, and WSS. Residue S513 participates in substrate binding. Substrate is bound at residue 628–631; sequence GPGR. FAD is bound by residues R656, Q726, and 726-730; that span reads QVHGG. G754 serves as a coordination point for substrate. Residues 755–757 and E757 each bind FAD; that span reads PDE. The residue at position 765 (K765) is an N6-acetyllysine.

It belongs to the acyl-CoA dehydrogenase family. In terms of assembly, homodimer. Requires FAD as cofactor.

The protein resides in the peroxisome. Its subcellular location is the mitochondrion membrane. It catalyses the reaction a 2,3-saturated acyl-CoA + oxidized [electron-transfer flavoprotein] + H(+) = a (2E)-enoyl-CoA + reduced [electron-transfer flavoprotein]. The catalysed reaction is docosanoyl-CoA + oxidized [electron-transfer flavoprotein] + H(+) = (2E)-docosenoyl-CoA + reduced [electron-transfer flavoprotein]. The enzyme catalyses tetracosanoyl-CoA + oxidized [electron-transfer flavoprotein] + H(+) = (2E)-tetracosenoyl-CoA + reduced [electron-transfer flavoprotein]. It carries out the reaction eicosanoyl-CoA + oxidized [electron-transfer flavoprotein] + H(+) = (2E)-eicosenoyl-CoA + reduced [electron-transfer flavoprotein]. It catalyses the reaction hexacosanoyl-CoA + oxidized [electron-transfer flavoprotein] + H(+) = (2E)-hexacosenoyl-CoA + reduced [electron-transfer flavoprotein]. The catalysed reaction is tricosanoyl-CoA + oxidized [electron-transfer flavoprotein] + H(+) = (2E)-tricosenoyl-CoA + reduced [electron-transfer flavoprotein]. Its pathway is lipid metabolism; fatty acid beta-oxidation. Functionally, acyl-CoA dehydrogenase, that exhibits maximal activity towards saturated C22-CoA. Probably participates in beta-oxydation and energy production but could also play a role in the metabolism of specific fatty acids to control fatty acids composition of cellular lipids in brain. The sequence is that of Acyl-CoA dehydrogenase family member 11 (Acad11) from Mus musculus (Mouse).